A 142-amino-acid polypeptide reads, in one-letter code: Hemoglobin subunit alpha-3 (142 aa).

The region spanning 2–142 is the Globin domain; it reads TLTDSDKAAV…VATVLTSKYR (141 aa). His59 contacts O2. Residue His88 coordinates heme b.

The protein belongs to the globin family. Heterotetramer of two alpha chains and two beta chains. In terms of tissue distribution, red blood cells.

Its function is as follows. This is a larval (tadpole) alpha-globin. The chain is Hemoglobin subunit alpha-3 (hba3) from Xenopus laevis (African clawed frog).